The primary structure comprises 578 residues: MNRGNPQALRHPQVPLGIANIIGRSTFPSVEGYLALSLCVAFIASASVFTHFHSQPEIKRLLEEELRNNTRLTTAFGINIDTIAGSTVFQMAHYILTDTTLIWVAINSYFAILAMCTKLIIKLTFKELSRQEEVAARQAFLSYILLTIVYLSVVTGPQKGHRVMPWMIWGGVCGFLSHLQFVTCQRLKYTSPSCDRGSQRVSFISLFLFFVSIAMTFMVSRFQQHLEWQPAVLLYFDCLLAVFRSTYILFRCISSSRVFSFNPDSVRHFNYWLELATNFACELLQFLSYAQLFVFAPGLNLTSIFFLYHMKLTYNCMREQLGRHRTHKKIFEHIESAYPSVKAANSDDRCIVCWELLGTSRRLPCSHQFHDWCLMWWLAQDSSCPTCRYVIPSPQEEASRTDSGNGNTMFRFNGRTFGFFTLPSFTVEVGSSFGNIFGRAAEPTQEQLQSMLETVLEMFPQMSPETILADLRQSGSAQSTIENILEGRMGLNASLIPGVLDEDLSDDTDNELEYEEHVEVVQEPDRTRQRTWTKLSSSSGEAELSYYEIQRANMIETYRRKYLASDKAADLRAMGITE.

The helical transmembrane segment at Gly32–Phe52 threads the bilayer. Asn68 carries N-linked (GlcNAc...) asparagine glycosylation. 7 consecutive transmembrane segments (helical) span residues Phe76–Leu96, Leu101–Ile121, Val134–Val154, Val163–Thr183, Ser202–Phe222, Pro230–Phe250, and Phe286–Phe306. The RING-type; atypical zinc finger occupies Cys350 to Arg388. One can recognise a CUE domain in the interval Gln447–Met489. Asn492 carries an N-linked (GlcNAc...) asparagine glycan.

It is found in the membrane. Functionally, proposed to have a role in neuroprotection. The polypeptide is E3 ubiquitin-protein ligase hrd-like protein 1 (Caenorhabditis briggsae).